A 156-amino-acid chain; its full sequence is Ribonuclease pancreatic (156 aa).

An N-terminal signal peptide occupies residues 1 to 28 (MALEKSLVLLPLLVLILLVLGWVQPSLG). Positions 35 and 38 each coordinate substrate. The Proton acceptor role is filled by H40. N50 and N62 each carry an N-linked (GlcNAc...) asparagine glycan. Intrachain disulfides connect C54/C112, C68/C123, C86/C138, and C93/C100. Residues 69 to 73 (KPVNT) and K94 contribute to the substrate site. An N-linked (GlcNAc...) asparagine glycan is attached at N104. R113 contacts substrate. The active-site Proton donor is the H147.

This sequence belongs to the pancreatic ribonuclease family. Monomer. Interacts with and forms tight 1:1 complexes with RNH1. Dimerization of two such complexes may occur. Interaction with RNH1 inhibits this protein. Pancreas and other tissues and body fluids (indicating it may have other physiological functions besides its role in digestion).

It localises to the secreted. The enzyme catalyses an [RNA] containing cytidine + H2O = an [RNA]-3'-cytidine-3'-phosphate + a 5'-hydroxy-ribonucleotide-3'-[RNA].. The catalysed reaction is an [RNA] containing uridine + H2O = an [RNA]-3'-uridine-3'-phosphate + a 5'-hydroxy-ribonucleotide-3'-[RNA].. In terms of biological role, endonuclease that catalyzes the cleavage of RNA on the 3' side of pyrimidine nucleotides. Acts on single-stranded and double-stranded RNA. This is Ribonuclease pancreatic (RNASE1) from Pongo pygmaeus (Bornean orangutan).